The primary structure comprises 624 residues: Bifunctional 3'-phosphoadenosine 5'-phosphosulfate synthase 1 (624 aa).

Residue Met1 is modified to N-acetylmethionine. The adenylyl-sulfate kinase stretch occupies residues 1-225 (MEIPGSLCKK…VVELLQERDI (225 aa)). Lys12 carries the N6-acetyllysine modification. 62–67 (GAGKTT) contributes to the ATP binding site. Adenosine 5'-phosphosulfate is bound by residues 89-92 (DNIR), Phe101, 106-109 (REEN), 132-133 (IS), Lys171, and 184-185 (GF). Residues Cys207, Cys212, 419 to 422 (QLRN), 521 to 525 (GRDPA), and Ala563 each bind ATP. A sulfate adenylyltransferase region spans residues 234–624 (VKELYVPENK…TEYYKSLEKA (391 aa)).

The protein in the N-terminal section; belongs to the APS kinase family. This sequence in the C-terminal section; belongs to the sulfate adenylyltransferase family. Homodimer. Expressed in testis, pancreas, kidney, thymus, prostate, ovary, small intestine, colon, leukocytes and liver. Also expressed in high endothelial venules (HEV) cells and in cartilage.

The enzyme catalyses sulfate + ATP + H(+) = adenosine 5'-phosphosulfate + diphosphate. It carries out the reaction adenosine 5'-phosphosulfate + ATP = 3'-phosphoadenylyl sulfate + ADP + H(+). The protein operates within sulfur metabolism; sulfate assimilation. With respect to regulation, inhibited by chlorate. The kinase activity is subject to inhibition by the substrate adenylyl sulfate. In terms of biological role, bifunctional enzyme with both ATP sulfurylase and APS kinase activity, which mediates two steps in the sulfate activation pathway. The first step is the transfer of a sulfate group to ATP to yield adenosine 5'-phosphosulfate (APS), and the second step is the transfer of a phosphate group from ATP to APS yielding 3'-phosphoadenylylsulfate (PAPS: activated sulfate donor used by sulfotransferase). In mammals, PAPS is the sole source of sulfate; APS appears to be only an intermediate in the sulfate-activation pathway. Required for normal biosynthesis of sulfated L-selectin ligands in endothelial cells. The sequence is that of Bifunctional 3'-phosphoadenosine 5'-phosphosulfate synthase 1 (PAPSS1) from Homo sapiens (Human).